Here is a 253-residue protein sequence, read N- to C-terminus: Exosome complex component Rrp4 (253 aa).

The S1 motif domain maps to 80-153 (GDIVIGIVVD…SRGPILTVQD (74 aa)).

It belongs to the RRP4 family. As to quaternary structure, component of the archaeal exosome complex. Forms a trimer of Rrp4 and/or Csl4 subunits. The trimer associates with a hexameric ring-like arrangement composed of 3 Rrp41-Rrp42 heterodimers.

The protein localises to the cytoplasm. Its function is as follows. Non-catalytic component of the exosome, which is a complex involved in RNA degradation. Increases the RNA binding and the efficiency of RNA degradation. Confers strong poly(A) specificity to the exosome. This chain is Exosome complex component Rrp4, found in Ignisphaera aggregans (strain DSM 17230 / JCM 13409 / AQ1.S1).